Consider the following 486-residue polypeptide: Cysteine--tRNA ligase (486 aa).

Residue cysteine 27 coordinates Zn(2+). A 'HIGH' region motif is present at residues 29-39 (PTTYNFIHLGN). Cysteine 207, histidine 232, and glutamate 236 together coordinate Zn(2+). The 'KMSKS' region signature appears at 264-268 (KMSKS). Lysine 267 is a binding site for ATP.

This sequence belongs to the class-I aminoacyl-tRNA synthetase family. As to quaternary structure, monomer. Zn(2+) is required as a cofactor.

Its subcellular location is the cytoplasm. The enzyme catalyses tRNA(Cys) + L-cysteine + ATP = L-cysteinyl-tRNA(Cys) + AMP + diphosphate. In Desulforamulus reducens (strain ATCC BAA-1160 / DSM 100696 / MI-1) (Desulfotomaculum reducens), this protein is Cysteine--tRNA ligase.